A 119-amino-acid polypeptide reads, in one-letter code: Holo-[acyl-carrier-protein] synthase (119 aa).

The Mg(2+) site is built by Asp8 and Glu59.

Belongs to the P-Pant transferase superfamily. AcpS family. The cofactor is Mg(2+).

It is found in the cytoplasm. The enzyme catalyses apo-[ACP] + CoA = holo-[ACP] + adenosine 3',5'-bisphosphate + H(+). Functionally, transfers the 4'-phosphopantetheine moiety from coenzyme A to a Ser of acyl-carrier-protein. This chain is Holo-[acyl-carrier-protein] synthase, found in Staphylococcus aureus (strain JH1).